The chain runs to 366 residues: Ribosomal RNA large subunit methyltransferase M (366 aa).

S-adenosyl-L-methionine contacts are provided by residues serine 188, 221–224, aspartate 240, aspartate 260, and aspartate 277; that span reads CPGG. The active-site Proton acceptor is lysine 306.

It belongs to the class I-like SAM-binding methyltransferase superfamily. RNA methyltransferase RlmE family. RlmM subfamily. In terms of assembly, monomer.

It localises to the cytoplasm. It catalyses the reaction cytidine(2498) in 23S rRNA + S-adenosyl-L-methionine = 2'-O-methylcytidine(2498) in 23S rRNA + S-adenosyl-L-homocysteine + H(+). Catalyzes the 2'-O-methylation at nucleotide C2498 in 23S rRNA. The polypeptide is Ribosomal RNA large subunit methyltransferase M (Salmonella paratyphi C (strain RKS4594)).